The following is a 635-amino-acid chain: Threonine--tRNA ligase (635 aa).

The 61-residue stretch at 1 to 61 folds into the TGS domain; it reads MIAITLPDGS…EQNVDLAIVT (61 aa). The tract at residues 242–533 is catalytic; the sequence is DHRKLGKLLD…LLENHAGALP (292 aa). Positions 333, 384, and 510 each coordinate Zn(2+).

This sequence belongs to the class-II aminoacyl-tRNA synthetase family. Homodimer. It depends on Zn(2+) as a cofactor.

The protein resides in the cytoplasm. The catalysed reaction is tRNA(Thr) + L-threonine + ATP = L-threonyl-tRNA(Thr) + AMP + diphosphate + H(+). Its function is as follows. Catalyzes the attachment of threonine to tRNA(Thr) in a two-step reaction: L-threonine is first activated by ATP to form Thr-AMP and then transferred to the acceptor end of tRNA(Thr). Also edits incorrectly charged L-seryl-tRNA(Thr). The polypeptide is Threonine--tRNA ligase (Ralstonia nicotianae (strain ATCC BAA-1114 / GMI1000) (Ralstonia solanacearum)).